We begin with the raw amino-acid sequence, 531 residues long: Arginine--tRNA ligase (531 aa).

The 'HIGH' region signature appears at 113–123 (ANPTGPLHIGH).

The protein belongs to the class-I aminoacyl-tRNA synthetase family. In terms of assembly, monomer.

It localises to the cytoplasm. It catalyses the reaction tRNA(Arg) + L-arginine + ATP = L-arginyl-tRNA(Arg) + AMP + diphosphate. The chain is Arginine--tRNA ligase from Campylobacter fetus subsp. fetus (strain 82-40).